A 105-amino-acid chain; its full sequence is MRPEKLDAAAIAEQLHRMEGWVLAEDGGSIWKAFRFKSFAEAFAFMTQCAFAAEKLNHHPEWFNVYNKVDVTLSTHDAQGLTELDFKLAAKMDQAAEGRMPDHMK.

The protein belongs to the pterin-4-alpha-carbinolamine dehydratase family.

The catalysed reaction is (4aS,6R)-4a-hydroxy-L-erythro-5,6,7,8-tetrahydrobiopterin = (6R)-L-erythro-6,7-dihydrobiopterin + H2O. The chain is Putative pterin-4-alpha-carbinolamine dehydratase from Sinorhizobium medicae (strain WSM419) (Ensifer medicae).